Here is a 302-residue protein sequence, read N- to C-terminus: Ornithine carbamoyltransferase (302 aa).

Carbamoyl phosphate is bound by residues 53–56 (STRT), Gln80, Arg104, and 131–134 (HPCQ). L-ornithine-binding positions include Asn162, Asp219, and 223–224 (SM). Carbamoyl phosphate is bound by residues 259–260 (CL) and Arg287.

It belongs to the aspartate/ornithine carbamoyltransferase superfamily. OTCase family.

The protein resides in the cytoplasm. The catalysed reaction is carbamoyl phosphate + L-ornithine = L-citrulline + phosphate + H(+). It functions in the pathway amino-acid biosynthesis; L-arginine biosynthesis; L-arginine from L-ornithine and carbamoyl phosphate: step 1/3. Functionally, reversibly catalyzes the transfer of the carbamoyl group from carbamoyl phosphate (CP) to the N(epsilon) atom of ornithine (ORN) to produce L-citrulline. The chain is Ornithine carbamoyltransferase from Hydrogenovibrio crunogenus (strain DSM 25203 / XCL-2) (Thiomicrospira crunogena).